The sequence spans 557 residues: Glutamine--tRNA ligase (557 aa).

The short motif at 42–52 (PEPNGYLHIGH) is the 'HIGH' region element. Residues 43–45 (EPN) and 49–55 (HIGHAKS) contribute to the ATP site. L-glutamine is bound by residues Asp75 and Tyr220. ATP contacts are provided by residues Thr239 and 270–271 (RL). The 'KMSKS' region signature appears at 277–281 (LTSKR).

This sequence belongs to the class-I aminoacyl-tRNA synthetase family. Monomer.

The protein localises to the cytoplasm. It carries out the reaction tRNA(Gln) + L-glutamine + ATP = L-glutaminyl-tRNA(Gln) + AMP + diphosphate. This chain is Glutamine--tRNA ligase, found in Haemophilus influenzae (strain 86-028NP).